A 207-amino-acid chain; its full sequence is Protein Nef (207 aa).

Glycine 2 carries N-myristoyl glycine; by host lipidation. Serine 6 is modified (phosphoserine; by host). The acidic; interacts with host PACS1 and PACS2; stabilizes the interaction of NEF/MHC-I with host AP1M1; necessary for MHC-I internalization stretch occupies residues 62–66; the sequence is EEEEE. The SH3-binding; interaction with Src family tyrosine kinases stretch occupies residues 70–79; it reads PVRPQVPLRP. Residues 73–76 carry the PxxP; stabilizes the interaction of NEF/MHC-I with host AP1M1; necessary for MHC-I internalization motif; that stretch reads PQVP. A mediates dimerization, Nef-PTE1 interaction region spans residues 109–125; it reads EILDLWVYNTQGFFPDW. Residues 149–181 are binding to ATP6V1H; that stretch reads VDPSEVEEINEGENNCLLHPASLHGMEDEDREV. The short motif at 165–166 is the Dileucine internalization motif; necessary for CD4 internalization element; sequence LL. The Diacidic; necessary for CD4 internalization motif lies at 175-176; that stretch reads ED.

Belongs to the lentivirus primate group Nef protein family. As to quaternary structure, monomer; cytosolic form. Homodimer; membrane bound form. Interacts with Nef associated p21-activated kinase (PAK2); this interaction activates PAK2. Associates with the Nef-MHC-I-AP1 complex; this complex is required for MHC-I internalization. Interacts (via C-terminus) with host PI3-kinase. Interacts with host PACS1; this interaction seems to be weak. Interacts with host PACS2. Interacts with host LCK and MAPK3; these interactions inhibit the kinase activity of the latter. Interacts with host ATP6V1H; this interaction may play a role in CD4 endocytosis. Associates with the CD4-Nef-AP2 complex; this complex is required for CD4 internalization. Interacts with host AP2 subunit alpha and AP2 subunit sigma2. Interacts with TCR-zeta chain; this interaction up-regulates the Fas ligand (FasL) surface expression. Interacts with host HCK, LYN, and SRC; these interactions activate the Src family kinases. Interacts with MAP3K5; this interaction inhibits the Fas and TNFR-mediated death signals. Interacts with beta-COP and PTE1. Interacts with human RACK1; this increases Nef phosphorylation by PKC. Interacts with TP53; this interaction decreases the half-life of TP53, protecting the infected cell against p53-mediated apoptosis. The virion-associated Nef proteins are cleaved by the viral protease to release the soluble C-terminal core protein. Nef is probably cleaved concomitantly with viral structural proteins on maturation of virus particles. In terms of processing, myristoylated. Post-translationally, phosphorylated on serine residues, probably by host PKCdelta and theta.

Its subcellular location is the host cell membrane. The protein localises to the virion. It localises to the secreted. The protein resides in the host Golgi apparatus membrane. In terms of biological role, factor of infectivity and pathogenicity, required for optimal virus replication. Alters numerous pathways of T-lymphocyte function and down-regulates immunity surface molecules in order to evade host defense and increase viral infectivity. Alters the functionality of other immunity cells, like dendritic cells, monocytes/macrophages and NK cells. Its function is as follows. In infected CD4(+) T-lymphocytes, down-regulates the surface MHC-I, mature MHC-II, CD4, CD28, CCR5 and CXCR4 molecules. Mediates internalization and degradation of host CD4 through the interaction of with the cytoplasmic tail of CD4, the recruitment of AP-2 (clathrin adapter protein complex 2), internalization through clathrin coated pits, and subsequent transport to endosomes and lysosomes for degradation. Diverts host MHC-I molecules to the trans-Golgi network-associated endosomal compartments by an endocytic pathway to finally target them for degradation. MHC-I down-regulation may involve AP-1 (clathrin adapter protein complex 1) or possibly Src family kinase-ZAP70/Syk-PI3K cascade recruited by PACS2. In consequence infected cells are masked for immune recognition by cytotoxic T-lymphocytes. Decreasing the number of immune receptors also prevents reinfection by more HIV particles (superinfection). Down-regulates host SERINC3 and SERINC5 thereby excluding these proteins from the viral particles. Virion infectivity is drastically higher when SERINC3 or SERINC5 are excluded from the viral envelope, because these host antiviral proteins impair the membrane fusion event necessary for subsequent virion penetration. Bypasses host T-cell signaling by inducing a transcriptional program nearly identical to that of anti-CD3 cell activation. Interaction with TCR-zeta chain up-regulates the Fas ligand (FasL). Increasing surface FasL molecules and decreasing surface MHC-I molecules on infected CD4(+) cells send attacking cytotoxic CD8+ T-lymphocytes into apoptosis. Functionally, plays a role in optimizing the host cell environment for viral replication without causing cell death by apoptosis. Protects the infected cells from apoptosis in order to keep them alive until the next virus generation is ready to strike. Inhibits the Fas and TNFR-mediated death signals by blocking MAP3K5/ASK1. Decreases the half-life of TP53, protecting the infected cell against p53-mediated apoptosis. Inhibits the apoptotic signals regulated by the Bcl-2 family proteins through the formation of a Nef/PI3-kinase/PAK2 complex that leads to activation of PAK2 and induces phosphorylation of host BAD. In terms of biological role, extracellular Nef protein targets CD4(+) T-lymphocytes for apoptosis by interacting with CXCR4 surface receptors. The sequence is that of Protein Nef from Homo sapiens (Human).